The primary structure comprises 310 residues: Ribosomal RNA small subunit methyltransferase H (310 aa).

S-adenosyl-L-methionine is bound by residues 32-34, aspartate 52, phenylalanine 79, aspartate 100, and glutamine 107; that span reads GGH.

This sequence belongs to the methyltransferase superfamily. RsmH family.

The protein resides in the cytoplasm. It catalyses the reaction cytidine(1402) in 16S rRNA + S-adenosyl-L-methionine = N(4)-methylcytidine(1402) in 16S rRNA + S-adenosyl-L-homocysteine + H(+). Its function is as follows. Specifically methylates the N4 position of cytidine in position 1402 (C1402) of 16S rRNA. This chain is Ribosomal RNA small subunit methyltransferase H, found in Bacillus cytotoxicus (strain DSM 22905 / CIP 110041 / 391-98 / NVH 391-98).